The sequence spans 141 residues: Cystatin (141 aa).

The N-terminal stretch at 1 to 26 (MVHSQLPVAASLRLLCALLLLPSATM) is a signal peptide. Residues 29–129 (GGLSPRSVTD…CRFQVWSRPW (101 aa)) enclose the Cystatin domain. The Secondary area of contact signature appears at 73–77 (QVVAG). 2 disulfides stabilise this stretch: C91-C107 and C120-C140.

The protein belongs to the cystatin family. As to expression, expressed by the venom gland at an extremely low level (at protein level).

Its subcellular location is the secreted. Its function is as follows. Inhibits various C1 cysteine proteases including cathepsin L, papain and cathepsin B. This protein has no toxic activity and its function in the venom is unknown. It may play a role as a housekeeping or regulatory protein. The sequence is that of Cystatin from Cryptophis nigrescens (Eastern small-eyed snake).